We begin with the raw amino-acid sequence, 292 residues long: Elongation factor Ts (292 aa).

Residues 81-84 (TDFV) are involved in Mg(2+) ion dislocation from EF-Tu.

Belongs to the EF-Ts family.

Its subcellular location is the cytoplasm. Its function is as follows. Associates with the EF-Tu.GDP complex and induces the exchange of GDP to GTP. It remains bound to the aminoacyl-tRNA.EF-Tu.GTP complex up to the GTP hydrolysis stage on the ribosome. This chain is Elongation factor Ts, found in Psychromonas ingrahamii (strain DSM 17664 / CCUG 51855 / 37).